The sequence spans 341 residues: Glycerol-3-phosphate dehydrogenase [NAD(P)+] (341 aa).

Residues S14, F15, R35, and K108 each contribute to the NADPH site. Sn-glycerol 3-phosphate-binding residues include K108 and G136. A140 lines the NADPH pocket. Positions 191, 244, 254, 255, and 256 each coordinate sn-glycerol 3-phosphate. The Proton acceptor role is filled by K191. R255 lines the NADPH pocket. Residues V279 and E281 each coordinate NADPH.

This sequence belongs to the NAD-dependent glycerol-3-phosphate dehydrogenase family.

It localises to the cytoplasm. It catalyses the reaction sn-glycerol 3-phosphate + NAD(+) = dihydroxyacetone phosphate + NADH + H(+). The catalysed reaction is sn-glycerol 3-phosphate + NADP(+) = dihydroxyacetone phosphate + NADPH + H(+). Its pathway is membrane lipid metabolism; glycerophospholipid metabolism. In terms of biological role, catalyzes the reduction of the glycolytic intermediate dihydroxyacetone phosphate (DHAP) to sn-glycerol 3-phosphate (G3P), the key precursor for phospholipid synthesis. The chain is Glycerol-3-phosphate dehydrogenase [NAD(P)+] from Pseudomonas fluorescens (strain SBW25).